The sequence spans 908 residues: Zinc finger CCCH domain-containing protein 41 (908 aa).

Polar residues predominate over residues methionine 1–leucine 13. A disordered region spans residues methionine 1–glutamine 124. The span at serine 20 to aspartate 34 shows a compositional bias: acidic residues. 2 stretches are compositionally biased toward polar residues: residues serine 48–alanine 59 and glycine 90–methionine 105. The C3H1-type zinc finger occupies glycine 200–asparagine 228. A disordered region spans residues asparagine 333–lysine 375. A compositionally biased stretch (polar residues) spans serine 356–asparagine 373. The RRM domain occupies arginine 438–arginine 510. Disordered regions lie at residues proline 558–lysine 590, valine 629–proline 695, and arginine 807–glutamine 908. Residues threonine 559 to glutamine 588 are compositionally biased toward polar residues. The stretch at leucine 587–valine 630 forms a coiled coil. A compositionally biased stretch (basic and acidic residues) spans valine 630 to threonine 647. A Phosphoserine modification is found at serine 657. A compositionally biased stretch (polar residues) spans alanine 677 to serine 688. A compositionally biased stretch (low complexity) spans arginine 807 to serine 828. Residues lysine 846–aspartate 863 are compositionally biased toward polar residues. A compositionally biased stretch (basic and acidic residues) spans threonine 865–isoleucine 886. Positions threonine 898–glutamine 908 are enriched in acidic residues.

The polypeptide is Zinc finger CCCH domain-containing protein 41 (Arabidopsis thaliana (Mouse-ear cress)).